The sequence spans 1183 residues: Translation initiation factor IF-2 (1183 aa).

Disordered stretches follow at residues 65-512 (SSKN…KVHI) and 540-579 (LARP…AMEL). Positions 83 to 99 (TQKDQKTEPKKKNHDQT) are enriched in basic and acidic residues. Positions 100–130 (ELSQAKLNTLLKPSQTLIKSQGSSQANNQKA) are enriched in polar residues. A compositionally biased stretch (basic and acidic residues) spans 220-229 (PKIDIQDKKP). Over residues 231 to 270 (QPNNQKAKTRINQGEISPQKVGQGNIQKIKSQNKQNAPSR) the composition is skewed to polar residues. The span at 288–304 (IRKEKPVNKPHTNEVRN) shows a compositional bias: basic and acidic residues. Composition is skewed to polar residues over residues 321–336 (ANRQ…NNRI) and 357–367 (NRTTQGQNRPG). A compositionally biased stretch (basic and acidic residues) spans 485–499 (GRPDWDDSAKLDALR). Basic residues-rich tracts occupy residues 544-553 (SKPKVGKRNN) and 560-574 (LKKR…RQRR). Positions 675-847 (RRPPVVTVMG…VLLVTEVEDL (173 aa)) constitute a tr-type G domain. A G1 region spans residues 684 to 691 (GHVDHGKT). 684-691 (GHVDHGKT) lines the GTP pocket. The interval 709–713 (GITQH) is G2. Residues 734-737 (DTPG) are G3. Residues 734–738 (DTPGH) and 788–791 (NKID) contribute to the GTP site. The interval 788 to 791 (NKID) is G4. The segment at 824–826 (SAI) is G5.

It belongs to the TRAFAC class translation factor GTPase superfamily. Classic translation factor GTPase family. IF-2 subfamily.

The protein localises to the cytoplasm. Functionally, one of the essential components for the initiation of protein synthesis. Protects formylmethionyl-tRNA from spontaneous hydrolysis and promotes its binding to the 30S ribosomal subunits. Also involved in the hydrolysis of GTP during the formation of the 70S ribosomal complex. The chain is Translation initiation factor IF-2 from Prochlorococcus marinus (strain NATL2A).